Here is a 59-residue protein sequence, read N- to C-terminus: MAKTIKVTQIRSSIGRLPKHKATLVGLGLRRIGHTVEREDTPAIRGMINLVSYMVKVEE.

It belongs to the universal ribosomal protein uL30 family. In terms of assembly, part of the 50S ribosomal subunit.

The polypeptide is Large ribosomal subunit protein uL30 (Photorhabdus laumondii subsp. laumondii (strain DSM 15139 / CIP 105565 / TT01) (Photorhabdus luminescens subsp. laumondii)).